A 268-amino-acid polypeptide reads, in one-letter code: Taurine import ATP-binding protein TauB (268 aa).

One can recognise an ABC transporter domain in the interval 4–236; that stretch reads LAIRNISMRF…EGVDADLREV (233 aa). 41-48 lines the ATP pocket; the sequence is GPSGCGKT.

The protein belongs to the ABC transporter superfamily. Taurine importer (TC 3.A.1.17.1) family. In terms of assembly, the complex is composed of two ATP-binding proteins (TauB), two transmembrane proteins (TauC) and a solute-binding protein (TauA).

Its subcellular location is the cell inner membrane. The enzyme catalyses taurine(out) + ATP + H2O = taurine(in) + ADP + phosphate + H(+). Part of the ABC transporter complex TauABC involved in taurine import. Responsible for energy coupling to the transport system. In Jannaschia sp. (strain CCS1), this protein is Taurine import ATP-binding protein TauB.